The primary structure comprises 301 residues: Small ribosomal subunit protein uS2 (301 aa).

The interval 282-301 (VRKQPVSENENVEAAAAEQK) is disordered. Low complexity predominate over residues 289-301 (ENENVEAAAAEQK).

It belongs to the universal ribosomal protein uS2 family.

The chain is Small ribosomal subunit protein uS2 from Koribacter versatilis (strain Ellin345).